A 575-amino-acid polypeptide reads, in one-letter code: Transcription factor coe2 (575 aa).

An interaction with DNA region spans residues 63-66 (RKSN). The C5-type zinc finger occupies 151–170 (CRVLLTHEVMCSRCCEKKSC). 2 interaction with DNA regions span residues 197-204 (NCLKTAGN) and 236-239 (NNSK). The region spanning 254–336 (PCIKAISPSE…CKGAPGRFIY (83 aa)) is the IPT/TIG domain. Residues 450–487 (IRNTSSISPRGYSSSSTPQQSNYSTPSNSMNGYSNVPM) are disordered. Residues 454–476 (SSISPRGYSSSSTPQQSNYSTPS) show a composition bias toward low complexity. Over residues 477-487 (NSMNGYSNVPM) the composition is skewed to polar residues.

It belongs to the COE family.

It is found in the nucleus. In terms of biological role, may play a pivotal role in the transcriptional cascade that specifies primary neurons in embryos. Stabilizes the higher neural potential of selected progenitor cells that express neurog2/X-ngnr-1 by maintaining Delta-Notch signaling. Thus ensures the transition between neural competence and irreversible commitment to a neural fate. Also promotes neuronal differentiation by activating neurod1 expression, directly or indirectly. The polypeptide is Transcription factor coe2 (Xenopus tropicalis (Western clawed frog)).